The following is a 496-amino-acid chain: Lysine--tRNA ligase (496 aa).

Mg(2+) is bound by residues E409 and E416.

The protein belongs to the class-II aminoacyl-tRNA synthetase family. As to quaternary structure, homodimer. The cofactor is Mg(2+).

It localises to the cytoplasm. The enzyme catalyses tRNA(Lys) + L-lysine + ATP = L-lysyl-tRNA(Lys) + AMP + diphosphate. This is Lysine--tRNA ligase from Streptococcus pneumoniae (strain Hungary19A-6).